The following is a 712-amino-acid chain: MREPALAASAMAYHPFHAPRPADFPMSAFLAAAQPSFFPALALPPGALAKPLPDPGLAGAAAAAAAAAAAAEAGLHVSALGPHPPAAHLRSLKSLEPEDEVEDDPKVTLEAKELWDQFHKLGTEMVITKSGRRMFPPFKVRVSGLDKKAKYILLMDIVAADDCRYKFHNSRWMVAGKADPEMPKRMYIHPDSPATGEQWMAKPVAFHKLKLTNNISDKHGFTILNSMHKYQPRFHIVRANDILKLPYSTFRTYVFPETDFIAVTAYQNDKITQLKIDNNPFAKGFRDTGNGRREKRKQLTLPSLRLYEEHCKPERDGAESDASSCDPAPAREPPASPGSAPSPLRLHRTRADEKCAADSDPEPERLSEERAGPALGRSPGLDGGSPPRLTEPERARERRSPERGKEPAESGGDGPFGLRSLEKERAEARRKDDGRKEAGEGKEPGLAPLVVQTDSASPLGAGHLPGLAFSGHLHGQQFFGPLGAGQPLFLHPGQFAMGPGAFSAMGMGHLLASVAGGGGGGGGGGPGTATGLDAGGLGPAASAASTPAPFPFHLSQHMLASQGIPMPTFGGLFPYPYTYMAAAAAAASALPATSAAAAAAAAAGSLSRSHFLGSARPRLRFSPYQIPVTIPPSTSLLTTGLAAEGSKAAGSNSREPSPLPELALRKVGAPSRGALSPSGSAKEAASELQSIQRLVSGLENQRALSPGRESPK.

Positions 109-287 (LEAKELWDQF…NNPFAKGFRD (179 aa)) form a DNA-binding region, T-box. Positions 313–449 (PERDGAESDA…EGKEPGLAPL (137 aa)) are disordered. 3 positions are modified to phosphoserine: serine 336, serine 342, and serine 359. Composition is skewed to basic and acidic residues over residues 349-371 (TRADEKCAADSDPEPERLSEERA), 390-408 (TEPERARERRSPERGKEPA), and 420-443 (SLEKERAEARRKDDGRKEAGEGKE). A repression domain 1 (RD1) region spans residues 517–601 (GGGGGGGGGP…ATSAAAAAAA (85 aa)). Residues serine 622, serine 653, serine 657, and serine 676 each carry the phosphoserine modification. Disordered stretches follow at residues 642-661 (AAEGSKAAGSNSREPSPLPE) and 666-688 (KVGAPSRGALSPSGSAKEAASEL).

In terms of assembly, binds DNA as a monomer. Interacts with PML (isoform PML-2, isoform PML-3 and isoform PML-4).

It localises to the nucleus. In terms of biological role, transcription factor which acts as a transcriptional repressor. May also function as a transcriptional activator. Binds to the palindromic T site 5'-TTCACACCTAGGTGTGAA-3' DNA sequence, or a half-site, which are present in the regulatory region of several genes. Required for cardiac atrioventricular canal formation. May cooperate with NKX2.5 to negatively modulate expression of NPPA/ANF in the atrioventricular canal. May play a role as a positive regulator of TGFB2 expression, perhaps acting in concert with GATA4 in the developing outflow tract myocardium. Plays a role in limb pattern formation. Acts as a transcriptional repressor of ADAM10 gene expression, perhaps in concert with histone deacetylase HDAC1 as cofactor. Involved in branching morphogenesis in both developing lungs and adult mammary glands, via negative modulation of target genes; acting redundantly with TBX3. Required, together with TBX3, to maintain cell proliferation in the embryonic lung mesenchyme; perhaps acting downstream of SHH, BMP and TGFbeta signaling. Involved in modulating early inner ear development, acting independently of, and also redundantly with TBX3, in different subregions of the developing ear. Acts as a negative regulator of PML function in cellular senescence. Acts as a negative regulator of expression of CDKN1A/p21, IL33 and CCN4; repression of CDKN1A is enhanced in response to UV-induced stress, perhaps as a result of phosphorylation by p38 MAPK. Negatively modulates expression of CDKN2A/p14ARF and CDH1/E-cadherin. Plays a role in induction of the epithelial-mesenchymal transition (EMT). Plays a role in melanocyte proliferation, perhaps via regulation of cyclin CCND1. Involved in melanogenesis, acting via negative modulation of expression of DHICA oxidase/TYRP1 and P protein/OCA2. Involved in regulating retinal pigment epithelium (RPE) cell proliferation, perhaps via negatively modulating transcription of the transcription factor CEBPD. The protein is T-box transcription factor TBX2 (TBX2) of Canis lupus familiaris (Dog).